The sequence spans 230 residues: Large ribosomal subunit protein uL1 (230 aa).

It belongs to the universal ribosomal protein uL1 family. As to quaternary structure, part of the 50S ribosomal subunit.

Its function is as follows. Binds directly to 23S rRNA. The L1 stalk is quite mobile in the ribosome, and is involved in E site tRNA release. Protein L1 is also a translational repressor protein, it controls the translation of the L11 operon by binding to its mRNA. This Bacillus mycoides (strain KBAB4) (Bacillus weihenstephanensis) protein is Large ribosomal subunit protein uL1.